A 31-amino-acid chain; its full sequence is Photosystem II reaction center protein T (31 aa).

The helical transmembrane segment at 3–23 threads the bilayer; that stretch reads ALVYTFLLVGTLGIIFFSIFF.

It belongs to the PsbT family. PSII is composed of 1 copy each of membrane proteins PsbA, PsbB, PsbC, PsbD, PsbE, PsbF, PsbH, PsbI, PsbJ, PsbK, PsbL, PsbM, PsbT, PsbY, PsbZ, Psb30/Ycf12, at least 3 peripheral proteins of the oxygen-evolving complex and a large number of cofactors. It forms dimeric complexes.

It is found in the plastid. Its subcellular location is the chloroplast thylakoid membrane. Functionally, found at the monomer-monomer interface of the photosystem II (PS II) dimer, plays a role in assembly and dimerization of PSII. PSII is a light-driven water plastoquinone oxidoreductase, using light energy to abstract electrons from H(2)O, generating a proton gradient subsequently used for ATP formation. In Chlamydomonas reinhardtii (Chlamydomonas smithii), this protein is Photosystem II reaction center protein T.